Here is a 154-residue protein sequence, read N- to C-terminus: Myoglobin (154 aa).

Positions 2 to 148 (GLSDQEWQHV…FRNDMASKYK (147 aa)) constitute a Globin domain. H65 contributes to the nitrite binding site. H65 is a binding site for O2. H94 serves as a coordination point for heme b.

Belongs to the globin family. Monomeric.

The protein resides in the cytoplasm. Its subcellular location is the sarcoplasm. The catalysed reaction is Fe(III)-heme b-[protein] + nitric oxide + H2O = Fe(II)-heme b-[protein] + nitrite + 2 H(+). The enzyme catalyses H2O2 + AH2 = A + 2 H2O. Its function is as follows. Monomeric heme protein which primary function is to store oxygen and facilitate its diffusion within muscle tissues. Reversibly binds oxygen through a pentacoordinated heme iron and enables its timely and efficient release as needed during periods of heightened demand. Depending on the oxidative conditions of tissues and cells, and in addition to its ability to bind oxygen, it also has a nitrite reductase activity whereby it regulates the production of bioactive nitric oxide. Under stress conditions, like hypoxia and anoxia, it also protects cells against reactive oxygen species thanks to its pseudoperoxidase activity. This chain is Myoglobin (MB), found in Uria lomvia (Thick-billed murre).